A 181-amino-acid chain; its full sequence is ATP synthase subunit b, chloroplastic (181 aa).

Residues 27–49 traverse the membrane as a helical segment; it reads LATNPINLSVVLGVVIYFGKGVL.

It belongs to the ATPase B chain family. In terms of assembly, F-type ATPases have 2 components, F(1) - the catalytic core - and F(0) - the membrane proton channel. F(1) has five subunits: alpha(3), beta(3), gamma(1), delta(1), epsilon(1). F(0) has four main subunits: a(1), b(1), b'(1) and c(10-14). The alpha and beta chains form an alternating ring which encloses part of the gamma chain. F(1) is attached to F(0) by a central stalk formed by the gamma and epsilon chains, while a peripheral stalk is formed by the delta, b and b' chains.

The protein localises to the plastid. It localises to the chloroplast thylakoid membrane. Functionally, f(1)F(0) ATP synthase produces ATP from ADP in the presence of a proton or sodium gradient. F-type ATPases consist of two structural domains, F(1) containing the extramembraneous catalytic core and F(0) containing the membrane proton channel, linked together by a central stalk and a peripheral stalk. During catalysis, ATP synthesis in the catalytic domain of F(1) is coupled via a rotary mechanism of the central stalk subunits to proton translocation. In terms of biological role, component of the F(0) channel, it forms part of the peripheral stalk, linking F(1) to F(0). The polypeptide is ATP synthase subunit b, chloroplastic (Lemna minor (Common duckweed)).